Reading from the N-terminus, the 488-residue chain is RuvB-like helicase 1 (488 aa).

Residues 1–11 (MATANTSSGSM) are compositionally biased toward polar residues. Residues 1–29 (MATANTSSGSMNGVGPVTMDSSTSGASRE) are disordered. Residue 87–94 (GGPGTGKT) coordinates ATP.

It belongs to the RuvB family. May form heterododecamers with RVB2. Component of the SWR1 chromatin remodeling complex, the INO80 chromatin remodeling complex, and of the R2TP complex.

Its subcellular location is the nucleus. It catalyses the reaction ATP + H2O = ADP + phosphate + H(+). DNA helicase which participates in several chromatin remodeling complexes, including the SWR1 and the INO80 complexes. The SWR1 complex mediates the ATP-dependent exchange of histone H2A for the H2A variant HZT1 leading to transcriptional regulation of selected genes by chromatin remodeling. The INO80 complex remodels chromatin by shifting nucleosomes and is involved in DNA repair. Also involved in pre-rRNA processing. The protein is RuvB-like helicase 1 (RVB1) of Mycosarcoma maydis (Corn smut fungus).